The chain runs to 140 residues: Nucleoside diphosphate kinase (140 aa).

ATP contacts are provided by Lys-11, Phe-59, Arg-87, Thr-93, Arg-104, and Asn-114. His-117 functions as the Pros-phosphohistidine intermediate in the catalytic mechanism.

It belongs to the NDK family. As to quaternary structure, homotetramer. Mg(2+) is required as a cofactor.

It is found in the cytoplasm. It carries out the reaction a 2'-deoxyribonucleoside 5'-diphosphate + ATP = a 2'-deoxyribonucleoside 5'-triphosphate + ADP. The catalysed reaction is a ribonucleoside 5'-diphosphate + ATP = a ribonucleoside 5'-triphosphate + ADP. Major role in the synthesis of nucleoside triphosphates other than ATP. The ATP gamma phosphate is transferred to the NDP beta phosphate via a ping-pong mechanism, using a phosphorylated active-site intermediate. In Chelativorans sp. (strain BNC1), this protein is Nucleoside diphosphate kinase.